A 245-amino-acid polypeptide reads, in one-letter code: Probable phosphatase YcdX (245 aa).

9 residues coordinate Zn(2+): His-7, His-9, His-15, His-40, Glu-73, His-101, His-131, Asp-192, and His-194.

The protein belongs to the PHP family. In terms of assembly, homotrimer. It depends on Zn(2+) as a cofactor.

The protein is Probable phosphatase YcdX of Escherichia coli O139:H28 (strain E24377A / ETEC).